The primary structure comprises 534 residues: CAP-Gly domain-containing linker protein 3 (534 aa).

Residues 1 to 16 (MTREDLPDSTPEESKL) show a composition bias toward basic and acidic residues. The segment at 1-33 (MTREDLPDSTPEESKLPMEFQSPLLEKRRRPVV) is disordered. ANK repeat units follow at residues 107 to 148 (TDMT…LRSR), 150 to 173 (TNMNALHYAAYFDVPELLRTLLKA), and 187 to 299 (NHGT…KAGT). The CAP-Gly 1 domain occupies 304–346 (GTTEFASGQWVGVELDEPDGKNDGSVGGIRYFICPPKQGIFAP). The segment at 349-391 (KISKAPDQPPSSVTSTPRTPRVDFSRVTGKGRKEKKATHKKSL) is disordered. Residues 358–367 (PSSVTSTPRT) show a composition bias toward low complexity. Over residues 377–390 (GKGRKEKKATHKKS) the composition is skewed to basic residues. A CAP-Gly 2 domain is found at 423–465 (GKTDFAPGYWFGIELEKPTGKHDGSVFGVRYFTCSAKNGVFAP). Residues 475 to 534 (PKDPQTDNNDMKKVHQVTMTQPKRNFTKVRTPKEIASENSMSRILFCCWFPWLLRAEMKS) form a goLD region.

Homodimer.

Its subcellular location is the cytoplasm. The protein localises to the golgi apparatus. It is found in the golgi stack. In terms of biological role, functions as a cytoplasmic linker protein. Involved in TGN-endosome dynamics. This Xenopus laevis (African clawed frog) protein is CAP-Gly domain-containing linker protein 3 (clip3).